A 75-amino-acid polypeptide reads, in one-letter code: MGSFSIWHWLIVLVIVVLVFGTKKLRNVGQDLGGAVKGFKDGMRDSEKSGEDVQQKIGGDTLDAQATDKSHTVSH.

A helical transmembrane segment spans residues 1–21 (MGSFSIWHWLIVLVIVVLVFG). Composition is skewed to basic and acidic residues over residues 43-54 (MRDSEKSGEDVQ) and 66-75 (ATDKSHTVSH). Positions 43 to 75 (MRDSEKSGEDVQQKIGGDTLDAQATDKSHTVSH) are disordered.

The protein belongs to the TatA/E family. The Tat system comprises two distinct complexes: a TatABC complex, containing multiple copies of TatA, TatB and TatC subunits, and a separate TatA complex, containing only TatA subunits. Substrates initially bind to the TatABC complex, which probably triggers association of the separate TatA complex to form the active translocon.

The protein localises to the cell inner membrane. Functionally, part of the twin-arginine translocation (Tat) system that transports large folded proteins containing a characteristic twin-arginine motif in their signal peptide across membranes. TatA could form the protein-conducting channel of the Tat system. This Aromatoleum aromaticum (strain DSM 19018 / LMG 30748 / EbN1) (Azoarcus sp. (strain EbN1)) protein is Sec-independent protein translocase protein TatA.